We begin with the raw amino-acid sequence, 455 residues long: Na(+)/H(+) antiporter NhaA (455 aa).

Helical transmembrane passes span 31-51 (ASGI…NSPW), 83-103 (GLMS…VLIG), 113-133 (FPLI…LLCV), 141-161 (GWGI…ILLG), 170-190 (VFVT…IALF), 198-218 (VSLL…LLGI), 231-251 (IWAA…LLAF), 309-329 (GLQP…NAGV), 345-365 (IGVA…FAWL), 383-403 (IFGA…IASL), and 414-434 (SKIG…VVLW).

This sequence belongs to the NhaA Na(+)/H(+) (TC 2.A.33) antiporter family.

Its subcellular location is the cell inner membrane. The catalysed reaction is Na(+)(in) + 2 H(+)(out) = Na(+)(out) + 2 H(+)(in). Functionally, na(+)/H(+) antiporter that extrudes sodium in exchange for external protons. This Koribacter versatilis (strain Ellin345) protein is Na(+)/H(+) antiporter NhaA.